The primary structure comprises 513 residues: Putative thymidine phosphorylase (513 aa).

It belongs to the thymidine/pyrimidine-nucleoside phosphorylase family. Type 2 subfamily.

The catalysed reaction is thymidine + phosphate = 2-deoxy-alpha-D-ribose 1-phosphate + thymine. The sequence is that of Putative thymidine phosphorylase from Bradyrhizobium diazoefficiens (strain JCM 10833 / BCRC 13528 / IAM 13628 / NBRC 14792 / USDA 110).